The primary structure comprises 291 residues: Beta-lactamase CTX-M-4 (291 aa).

A signal peptide spans 1–28 (MMTQSIRRSMLTVMATLPLLFSSATLHA). Catalysis depends on serine 73, which acts as the Acyl-ester intermediate. 237 to 239 (KTG) serves as a coordination point for substrate.

It belongs to the class-A beta-lactamase family.

It carries out the reaction a beta-lactam + H2O = a substituted beta-amino acid. Functionally, has cefotaxime-hydrolyzing activity. The sequence is that of Beta-lactamase CTX-M-4 (bla) from Salmonella typhimurium.